A 279-amino-acid polypeptide reads, in one-letter code: uncharacterized protein (279 aa).

One can recognise an HTH rpiR-type domain in the interval Met1–Lys77. The H-T-H motif DNA-binding region spans Ile37 to Lys56. One can recognise an SIS domain in the interval Cys123–Ser263.

This is an uncharacterized protein from Clostridium perfringens (strain 13 / Type A).